The chain runs to 90 residues: ATP-dependent Clp protease adapter protein ClpS (90 aa).

It belongs to the ClpS family. In terms of assembly, binds to the N-terminal domain of the chaperone ClpA.

Involved in the modulation of the specificity of the ClpAP-mediated ATP-dependent protein degradation. The chain is ATP-dependent Clp protease adapter protein ClpS from Helicobacter pylori (strain J99 / ATCC 700824) (Campylobacter pylori J99).